A 205-amino-acid polypeptide reads, in one-letter code: tRNA (guanine-N(7)-)-methyltransferase (205 aa).

S-adenosyl-L-methionine is bound by residues E34, E59, D86, and D107. D107 is a catalytic residue. K111 contributes to the substrate binding site. The tract at residues 113-118 is interaction with RNA; sequence RHEKRR. Residues D144 and 182-185 each bind substrate; that span reads TGYE.

This sequence belongs to the class I-like SAM-binding methyltransferase superfamily. TrmB family.

It carries out the reaction guanosine(46) in tRNA + S-adenosyl-L-methionine = N(7)-methylguanosine(46) in tRNA + S-adenosyl-L-homocysteine. Its pathway is tRNA modification; N(7)-methylguanine-tRNA biosynthesis. Functionally, catalyzes the formation of N(7)-methylguanine at position 46 (m7G46) in tRNA. This Mycoplasmopsis synoviae (strain 53) (Mycoplasma synoviae) protein is tRNA (guanine-N(7)-)-methyltransferase.